Here is a 369-residue protein sequence, read N- to C-terminus: Signal recognition particle receptor FtsY (369 aa).

Residues 20-42 (GEENKKEPETRQTDQLESKKEET) show a composition bias toward basic and acidic residues. The tract at residues 20-58 (GEENKKEPETRQTDQLESKKEETIQQQQNVQQPQAENKI) is disordered. Low complexity predominate over residues 44-53 (QQQQNVQQPQ). Residues 180–187 (GVNGVGKT), 262–266 (DTAGR), and 320–323 (TKVD) each bind GTP.

It belongs to the GTP-binding SRP family. FtsY subfamily. In terms of assembly, part of the signal recognition particle protein translocation system, which is composed of SRP and FtsY.

Its subcellular location is the cell membrane. The protein resides in the cytoplasm. It catalyses the reaction GTP + H2O = GDP + phosphate + H(+). In terms of biological role, involved in targeting and insertion of nascent membrane proteins into the cytoplasmic membrane. Acts as a receptor for the complex formed by the signal recognition particle (SRP) and the ribosome-nascent chain (RNC). This chain is Signal recognition particle receptor FtsY, found in Sulfolobus acidocaldarius (strain ATCC 33909 / DSM 639 / JCM 8929 / NBRC 15157 / NCIMB 11770).